A 727-amino-acid chain; its full sequence is Polyribonucleotide nucleotidyltransferase (727 aa).

Mg(2+)-binding residues include D488 and D494. In terms of domain architecture, KH spans 555–614 (PKLYTMKINPEKIRDVIGKGGATIRALTDETGCQINIEEDGTITIAATEAAKADEAKRRI). An S1 motif domain is found at 624 to 692 (GKVYEGPVTK…DKGRVKLSMK (69 aa)). Positions 691–727 (MKALADRPAGDSGRPAPAERGERRERRDGGASEQQQQ) are disordered. Positions 707-720 (PAERGERRERRDGG) are enriched in basic and acidic residues.

This sequence belongs to the polyribonucleotide nucleotidyltransferase family. The cofactor is Mg(2+).

The protein localises to the cytoplasm. It carries out the reaction RNA(n+1) + phosphate = RNA(n) + a ribonucleoside 5'-diphosphate. Involved in mRNA degradation. Catalyzes the phosphorolysis of single-stranded polyribonucleotides processively in the 3'- to 5'-direction. The polypeptide is Polyribonucleotide nucleotidyltransferase (Acidovorax ebreus (strain TPSY) (Diaphorobacter sp. (strain TPSY))).